The following is a 211-amino-acid chain: Ras-related protein RABB1b (211 aa).

Position 13–20 (13–20 (GDTGVGKS)) interacts with GTP. An Effector region motif is present at residues 35–43 (HDLTIGVEF). GTP is bound by residues 61-65 (DTAGQ), 119-122 (NKCD), and 149-150 (SA). Residues cysteine 209 and cysteine 210 are each lipidated (S-geranylgeranyl cysteine).

This sequence belongs to the small GTPase superfamily. Rab family.

The protein resides in the cell membrane. Intracellular vesicle trafficking and protein transport. In Arabidopsis thaliana (Mouse-ear cress), this protein is Ras-related protein RABB1b (RABB1B).